The chain runs to 199 residues: Crossover junction endodeoxyribonuclease RuvC (199 aa).

Active-site residues include Asp7, Glu68, and Asp141. 3 residues coordinate Mg(2+): Asp7, Glu68, and Asp141.

The protein belongs to the RuvC family. In terms of assembly, homodimer which binds Holliday junction (HJ) DNA. The HJ becomes 2-fold symmetrical on binding to RuvC with unstacked arms; it has a different conformation from HJ DNA in complex with RuvA. In the full resolvosome a probable DNA-RuvA(4)-RuvB(12)-RuvC(2) complex forms which resolves the HJ. It depends on Mg(2+) as a cofactor.

Its subcellular location is the cytoplasm. The enzyme catalyses Endonucleolytic cleavage at a junction such as a reciprocal single-stranded crossover between two homologous DNA duplexes (Holliday junction).. The RuvA-RuvB-RuvC complex processes Holliday junction (HJ) DNA during genetic recombination and DNA repair. Endonuclease that resolves HJ intermediates. Cleaves cruciform DNA by making single-stranded nicks across the HJ at symmetrical positions within the homologous arms, yielding a 5'-phosphate and a 3'-hydroxyl group; requires a central core of homology in the junction. The consensus cleavage sequence is 5'-(A/T)TT(C/G)-3'. Cleavage occurs on the 3'-side of the TT dinucleotide at the point of strand exchange. HJ branch migration catalyzed by RuvA-RuvB allows RuvC to scan DNA until it finds its consensus sequence, where it cleaves and resolves the cruciform DNA. In Saccharopolyspora erythraea (strain ATCC 11635 / DSM 40517 / JCM 4748 / NBRC 13426 / NCIMB 8594 / NRRL 2338), this protein is Crossover junction endodeoxyribonuclease RuvC.